The following is a 280-amino-acid chain: Probable endonuclease 4 (280 aa).

9 residues coordinate Zn(2+): His69, His109, Glu145, Asp179, His182, His216, Asp229, His231, and Glu261.

This sequence belongs to the AP endonuclease 2 family. Zn(2+) serves as cofactor.

It catalyses the reaction Endonucleolytic cleavage to 5'-phosphooligonucleotide end-products.. Functionally, endonuclease IV plays a role in DNA repair. It cleaves phosphodiester bonds at apurinic or apyrimidinic (AP) sites, generating a 3'-hydroxyl group and a 5'-terminal sugar phosphate. The sequence is that of Probable endonuclease 4 from Photorhabdus laumondii subsp. laumondii (strain DSM 15139 / CIP 105565 / TT01) (Photorhabdus luminescens subsp. laumondii).